The sequence spans 486 residues: Protein nucleotidyltransferase YdiU (486 aa).

Residues Gly90, Gly92, Arg93, Lys113, Asp125, Gly126, Arg176, and Arg183 each contribute to the ATP site. Asp252 functions as the Proton acceptor in the catalytic mechanism. Residues Asn253 and Asp262 each coordinate Mg(2+). Residue Asp262 participates in ATP binding.

This sequence belongs to the SELO family. The cofactor is Mg(2+). Mn(2+) serves as cofactor.

It catalyses the reaction L-seryl-[protein] + ATP = 3-O-(5'-adenylyl)-L-seryl-[protein] + diphosphate. It carries out the reaction L-threonyl-[protein] + ATP = 3-O-(5'-adenylyl)-L-threonyl-[protein] + diphosphate. The enzyme catalyses L-tyrosyl-[protein] + ATP = O-(5'-adenylyl)-L-tyrosyl-[protein] + diphosphate. The catalysed reaction is L-histidyl-[protein] + UTP = N(tele)-(5'-uridylyl)-L-histidyl-[protein] + diphosphate. It catalyses the reaction L-seryl-[protein] + UTP = O-(5'-uridylyl)-L-seryl-[protein] + diphosphate. It carries out the reaction L-tyrosyl-[protein] + UTP = O-(5'-uridylyl)-L-tyrosyl-[protein] + diphosphate. Its function is as follows. Nucleotidyltransferase involved in the post-translational modification of proteins. It can catalyze the addition of adenosine monophosphate (AMP) or uridine monophosphate (UMP) to a protein, resulting in modifications known as AMPylation and UMPylation. The protein is Protein nucleotidyltransferase YdiU of Pseudomonas entomophila (strain L48).